We begin with the raw amino-acid sequence, 341 residues long: MNTETRRVTDKRERPLRDLRISVTDRCNFRCTYCMPAELFGPDYPFLQKTELLSFEELERLAKLFVGRFGVEKIRLTGGEPLMRKDMPELIKKLARIPGLKDIAMTTNGSLLPVYAEKLKQAGLHRVTVSLDSLEDERFKAINGRGVSVNKVLEGIEAAKAAGLGVKINMVVQKGVNEKDILPMARYFKEKGHILRFIEFMDVGNTNQWNKKDVITKAEIIDLINQHMPTEPIEANYKGEVASRFRYLDGSGEIGVISSVSDAFCASCNRARLSARGELFTCLFASSGYDVRKLVRGGLTDDELTESIASVWRNRTDQYSIDRALSKTDGKKKVEMSYIGG.

In terms of domain architecture, Radical SAM core spans 11 to 231 (KRERPLRDLR…DLINQHMPTE (221 aa)). Residue Arg20 participates in GTP binding. Residues Cys27 and Cys31 each contribute to the [4Fe-4S] cluster site. Tyr33 contacts S-adenosyl-L-methionine. Position 34 (Cys34) interacts with [4Fe-4S] cluster. Arg75 contacts GTP. Gly79 serves as a coordination point for S-adenosyl-L-methionine. Position 106 (Thr106) interacts with GTP. Ser130 contributes to the S-adenosyl-L-methionine binding site. A GTP-binding site is contributed by Lys167. Residue Met201 participates in S-adenosyl-L-methionine binding. The [4Fe-4S] cluster site is built by Cys265 and Cys268. 270–272 (RAR) contributes to the GTP binding site. Cys282 contacts [4Fe-4S] cluster.

It belongs to the radical SAM superfamily. MoaA family. As to quaternary structure, monomer and homodimer. Requires [4Fe-4S] cluster as cofactor.

The enzyme catalyses GTP + AH2 + S-adenosyl-L-methionine = (8S)-3',8-cyclo-7,8-dihydroguanosine 5'-triphosphate + 5'-deoxyadenosine + L-methionine + A + H(+). The protein operates within cofactor biosynthesis; molybdopterin biosynthesis. Catalyzes the cyclization of GTP to (8S)-3',8-cyclo-7,8-dihydroguanosine 5'-triphosphate. This chain is GTP 3',8-cyclase, found in Bacillus velezensis (strain DSM 23117 / BGSC 10A6 / LMG 26770 / FZB42) (Bacillus amyloliquefaciens subsp. plantarum).